A 419-amino-acid polypeptide reads, in one-letter code: Adenylosuccinate synthetase (419 aa).

Residues 15-21 (GDEGKGK) and 43-45 (GHT) contribute to the GTP site. Residue aspartate 16 is the Proton acceptor of the active site. The Mg(2+) site is built by aspartate 16 and glycine 43. Residues 16-19 (DEGK), 41-44 (NAGH), threonine 128, arginine 142, glutamine 223, threonine 238, and arginine 302 contribute to the IMP site. Residue histidine 44 is the Proton donor of the active site. 298–304 (TTTGRAR) is a substrate binding site. GTP-binding positions include arginine 304, 330 to 332 (KLD), and 408 to 410 (STS).

This sequence belongs to the adenylosuccinate synthetase family. As to quaternary structure, homodimer. Requires Mg(2+) as cofactor.

The protein resides in the cytoplasm. The enzyme catalyses IMP + L-aspartate + GTP = N(6)-(1,2-dicarboxyethyl)-AMP + GDP + phosphate + 2 H(+). The protein operates within purine metabolism; AMP biosynthesis via de novo pathway; AMP from IMP: step 1/2. Its function is as follows. Plays an important role in the de novo pathway of purine nucleotide biosynthesis. Catalyzes the first committed step in the biosynthesis of AMP from IMP. In Sulfurimonas denitrificans (strain ATCC 33889 / DSM 1251) (Thiomicrospira denitrificans (strain ATCC 33889 / DSM 1251)), this protein is Adenylosuccinate synthetase.